The primary structure comprises 496 residues: Transcription factor CP2 (496 aa).

One can recognise a Grh/CP2 DB domain in the interval 61–300 (ENKILPFQYV…SPGFNSSHSS (240 aa)). The segment at 133–386 (EHQQLEGWRW…LFNALKGRMV (254 aa)) is DNA-binding. Disordered regions lie at residues 238–268 (FKPK…YQPS) and 296–327 (SSHS…LLPT). Over residues 241–265 (KGADRKQKTDREKMEKRTPHEKEKY) the composition is skewed to basic and acidic residues.

Belongs to the grh/CP2 family. CP2 subfamily. As to quaternary structure, component of the SSP (stage selector protein) complex, which appears to be a heteromer of TFCP2 and 2 copies of NFE4. In terms of tissue distribution, expressed in the epiblast at the pre-primitive streak stage. At the primitive streak stage, expressed in the extending primitive streak and in the prospective neural plate. At stages 7 and 8, expressed in the neural folds, somites and in the regressing primitive streak. At stage 12, ubiquitously expressed in the whole embryo.

The protein localises to the nucleus. Functionally, binds the B-response element 5'-CAAGTCCAGGCAAGT-3' of the ENS1/ERNI promoter. May be the major transcription activator thus being essential for its expression. The sequence is that of Transcription factor CP2 (TFCP2) from Gallus gallus (Chicken).